A 303-amino-acid polypeptide reads, in one-letter code: Bidirectional sugar transporter SWEET14 (303 aa).

The Extracellular portion of the chain corresponds to 1–9; that stretch reads MAGMSLQHP. Residues 10 to 30 traverse the membrane as a helical segment; sequence WAFAFGLLGNIISFMTYLAPL. In terms of domain architecture, MtN3/slv 1 spans 13-98; that stretch reads AFGLLGNIIS…AVYLVYAPKK (86 aa). Topologically, residues 31-44 are cytoplasmic; the sequence is PTFYRIYKSKSTQG. A helical membrane pass occupies residues 45–65; the sequence is FQSVPYVVALFSAMLWIYYAL. The Extracellular segment spans residues 66-72; the sequence is LKSDECL. A helical membrane pass occupies residues 73–93; sequence LITINSAGCVIETIYIAVYLV. Over 94–105 the chain is Cytoplasmic; it reads YAPKKAKMFTAK. A helical membrane pass occupies residues 106–126; it reads LLLLVNVGVFGLILLLTLLLS. Residues 127–133 lie on the Extracellular side of the membrane; sequence AGDRRIV. The helical transmembrane segment at 134 to 154 threads the bilayer; it reads VLGWVCVGFSVSVFVAPLSII. The 84-residue stretch at 134-217 folds into the MtN3/slv 2 domain; the sequence is VLGWVCVGFS…MGLYAMYRNS (84 aa). At 155 to 167 the chain is on the cytoplasmic side; the sequence is RLVVRTKSVEFMP. The helical transmembrane segment at 168–188 threads the bilayer; it reads FSLSFSLTISAVVWFLYGLLI. The Extracellular segment spans residues 189-192; it reads KDKY. The helical transmembrane segment at 193-213 threads the bilayer; that stretch reads VALPNVLGFSFGVIQMGLYAM. Residues 214–303 lie on the Cytoplasmic side of the membrane; that stretch reads YRNSTPKAVL…AGAGEKKVAA (90 aa). The disordered stretch occupies residues 266–290; that stretch reads HPVDVESPPAEAPPQEDDKAAAATA.

It belongs to the SWEET sugar transporter family. As to quaternary structure, forms homooligomers and/or heterooligomers.

Its subcellular location is the cell membrane. Its function is as follows. Mediates both low-affinity uptake and efflux of sugar across the plasma membrane. The protein is Bidirectional sugar transporter SWEET14 (SWEET14) of Oryza sativa subsp. indica (Rice).